Here is a 345-residue protein sequence, read N- to C-terminus: Glycerol-3-phosphate dehydrogenase [NAD(P)+] (345 aa).

Positions 23, 24, 44, and 118 each coordinate NADPH. Residues Lys-118, Gly-147, and Thr-149 each contribute to the sn-glycerol 3-phosphate site. Ala-151 lines the NADPH pocket. The sn-glycerol 3-phosphate site is built by Lys-203, Asp-256, Ser-266, Arg-267, and Asn-268. Residue Lys-203 is the Proton acceptor of the active site. An NADPH-binding site is contributed by Arg-267. NADPH is bound by residues Val-291 and Glu-293.

It belongs to the NAD-dependent glycerol-3-phosphate dehydrogenase family.

The protein resides in the cytoplasm. It carries out the reaction sn-glycerol 3-phosphate + NAD(+) = dihydroxyacetone phosphate + NADH + H(+). The catalysed reaction is sn-glycerol 3-phosphate + NADP(+) = dihydroxyacetone phosphate + NADPH + H(+). Its pathway is membrane lipid metabolism; glycerophospholipid metabolism. Its function is as follows. Catalyzes the reduction of the glycolytic intermediate dihydroxyacetone phosphate (DHAP) to sn-glycerol 3-phosphate (G3P), the key precursor for phospholipid synthesis. This Vibrio parahaemolyticus serotype O3:K6 (strain RIMD 2210633) protein is Glycerol-3-phosphate dehydrogenase [NAD(P)+].